A 386-amino-acid polypeptide reads, in one-letter code: MAEIPTSSNPSDDLETQKLNGNEEDYDHHHDEDPESDDENYEYALQIAEMLPFPMVMKTAIELDLLGIIATAGPDRQLSAAEIAAALPAAGNPDAPAMLDRMLYLLATYSVVTCTAVDGGASGGVVRKYGLAPVAKYFVSNKDGVSLGALISLNQGQAFLASWSKLKEAVLEGGIPFNKFHGMEVFHYQGTDPRFNEIFNKAMYDQSTYTIKKIVRRYKGFENIQRLVDVGGGLGHTLRVITSNYPSIKGINFDLPHVIQHAPTIPGVEHVGGDMFESIPNGDAIFMKCLLHDWSDEHCLKILKNCYKALPRKGKVIVVEMNMIEEPQTTPLAKAISQLDVGMMTQSPGGKERTRREFQTLAEAAGFAEFNPVCHVACFWVMEFLK.

The S-adenosyl-L-homocysteine site is built by Ser207, Gly231, Asp254, Asp274, and Lys288. Asp254 contacts S-adenosyl-L-methionine. His292 acts as the Proton acceptor in catalysis.

It belongs to the class I-like SAM-binding methyltransferase superfamily. Cation-independent O-methyltransferase family. In terms of assembly, homodimer.

The catalysed reaction is dopamine + S-adenosyl-L-methionine = 4-methoxytyramine + S-adenosyl-L-homocysteine + H(+). It carries out the reaction 3,4-dihydroxy-5-methoxyphenethylamine + S-adenosyl-L-methionine = 3-hydroxy-4,5-dimethoxyphenethylamine + S-adenosyl-L-homocysteine + H(+). It catalyses the reaction 3-hydroxy-4,5-dimethoxyphenethylamine + S-adenosyl-L-methionine = mescaline + S-adenosyl-L-homocysteine + H(+). The enzyme catalyses 4-hydroxy-3,5-dimethoxyphenethylamine + S-adenosyl-L-methionine = mescaline + S-adenosyl-L-homocysteine + H(+). It participates in aromatic compound metabolism. The protein operates within alkaloid biosynthesis. O-methyltransferase participating in the biosynthesis of natural products derived from phenylethylamine, including mescaline, a natural hallucinogen potentially used in psychotherapeutic treatments. Catalyzes the O-methylation of mescaline para hydroxyl groups, using dopamine, 3,4-dihydroxy-5-methoxyphenethylamine, 3-hydroxy-4,5-dimethoxyphenethylamine and 4-hydroxy-3,5-dimethoxyphenethylamine as substrates. The protein is O-methyltransferase 10 of Lophophora williamsii (Peyote).